The chain runs to 364 residues: MMLPSPVTSTPFSVKDILNLEQQHQHFHGAHLQADLEHHFHSAPCMLAAAEGTQFSDGGEEDEEDEGEKLSYLNSLAAADGHGDSGLCPQGYVHTVLRDSCSEPKEHEEEPEVVRDRSQKSCQLKKSLETAGDCKAAEESERPKPRSRRKPRVLFSQAQVFELERRFKQQRYLSAPEREHLASSLKLTSTQVKIWFQNRRYKCKRQRQDKSLELGAHAPPPPPRRVAVPVLVRDGKPCVTPSAQAYGAPYSVGASAYSYNSFPAYGYGNSAAAAAAAAAAAAAAAAYSSSYGCAYPAGGGGGGGGTSAATTAMQPACSAAGGGPFVNVSNLGGFGSGGSAQPLHQGTAAGAACAQGTLQGIRAW.

The disordered stretch occupies residues 132-153 (GDCKAAEESERPKPRSRRKPRV). Residues 135 to 144 (KAAEESERPK) show a composition bias toward basic and acidic residues. Residues 148–207 (RRKPRVLFSQAQVFELERRFKQQRYLSAPEREHLASSLKLTSTQVKIWFQNRRYKCKRQR) constitute a DNA-binding region (homeobox).

Belongs to the NK-2 homeobox family.

Its subcellular location is the nucleus. Its function is as follows. Transcription factor. This chain is Homeobox protein Nkx-2.3 (NKX2-3), found in Homo sapiens (Human).